The sequence spans 58 residues: Ribosome modulation factor (58 aa).

The protein belongs to the ribosome modulation factor family.

The protein resides in the cytoplasm. Functionally, during stationary phase, converts 70S ribosomes to an inactive dimeric form (100S ribosomes). This chain is Ribosome modulation factor, found in Tolumonas auensis (strain DSM 9187 / NBRC 110442 / TA 4).